The primary structure comprises 310 residues: HPr kinase/phosphorylase (310 aa).

Catalysis depends on residues H138 and K159. Residue 153–160 coordinates ATP; sequence GKSGVGKS. A Mg(2+)-binding site is contributed by S160. D177 acts as the Proton acceptor; for phosphorylation activity. Proton donor; for dephosphorylation activity in catalysis. The segment at 201–210 is important for the catalytic mechanism of both phosphorylation and dephosphorylation; the sequence is LEIRGLGIIN. Mg(2+) is bound at residue E202. R243 is an active-site residue. The interval 264–269 is important for the catalytic mechanism of dephosphorylation; it reads PVRPGR.

The protein belongs to the HPrK/P family. In terms of assembly, homohexamer. Requires Mg(2+) as cofactor.

The enzyme catalyses [HPr protein]-L-serine + ATP = [HPr protein]-O-phospho-L-serine + ADP + H(+). It catalyses the reaction [HPr protein]-O-phospho-L-serine + phosphate + H(+) = [HPr protein]-L-serine + diphosphate. Functionally, catalyzes the ATP- as well as the pyrophosphate-dependent phosphorylation of a specific serine residue in HPr, a phosphocarrier protein of the phosphoenolpyruvate-dependent sugar phosphotransferase system (PTS). HprK/P also catalyzes the pyrophosphate-producing, inorganic phosphate-dependent dephosphorylation (phosphorolysis) of seryl-phosphorylated HPr (P-Ser-HPr). The two antagonistic activities of HprK/P are regulated by several intracellular metabolites, which change their concentration in response to the absence or presence of rapidly metabolisable carbon sources (glucose, fructose, etc.) in the growth medium. Also phosphorylates/dephosphorylates the HPr-like catabolite repression protein crh on a specific serine residue. Therefore, by controlling the phosphorylation state of HPr and crh, HPrK/P is a sensor enzyme that plays a major role in the regulation of carbon metabolism and sugar transport: it mediates carbon catabolite repression (CCR), and regulates PTS-catalyzed carbohydrate uptake and inducer exclusion. In Bacillus velezensis (strain DSM 23117 / BGSC 10A6 / LMG 26770 / FZB42) (Bacillus amyloliquefaciens subsp. plantarum), this protein is HPr kinase/phosphorylase.